The following is a 65-amino-acid chain: Large ribosomal subunit protein bL35 (65 aa).

Residues 1–15 (MPKMKTKSSAKKRFS) are compositionally biased toward basic residues. The tract at residues 1–21 (MPKMKTKSSAKKRFSIRAGGS) is disordered.

The protein belongs to the bacterial ribosomal protein bL35 family.

This chain is Large ribosomal subunit protein bL35, found in Dechloromonas aromatica (strain RCB).